Reading from the N-terminus, the 200-residue chain is 3-isopropylmalate dehydratase small subunit (200 aa).

Belongs to the LeuD family. LeuD type 1 subfamily. In terms of assembly, heterodimer of LeuC and LeuD.

The enzyme catalyses (2R,3S)-3-isopropylmalate = (2S)-2-isopropylmalate. It functions in the pathway amino-acid biosynthesis; L-leucine biosynthesis; L-leucine from 3-methyl-2-oxobutanoate: step 2/4. In terms of biological role, catalyzes the isomerization between 2-isopropylmalate and 3-isopropylmalate, via the formation of 2-isopropylmaleate. The sequence is that of 3-isopropylmalate dehydratase small subunit from Campylobacter jejuni subsp. doylei (strain ATCC BAA-1458 / RM4099 / 269.97).